A 313-amino-acid chain; its full sequence is Biotin synthase (313 aa).

Positions 28–258 (NFGNDIELCS…LFPQARLRLS (231 aa)) constitute a Radical SAM core domain. [4Fe-4S] cluster contacts are provided by Cys46, Cys50, and Cys53. The [2Fe-2S] cluster site is built by Cys90, Cys121, Cys181, and Arg256.

Belongs to the radical SAM superfamily. Biotin synthase family. In terms of assembly, homodimer. The cofactor is [4Fe-4S] cluster. [2Fe-2S] cluster serves as cofactor.

It catalyses the reaction (4R,5S)-dethiobiotin + (sulfur carrier)-SH + 2 reduced [2Fe-2S]-[ferredoxin] + 2 S-adenosyl-L-methionine = (sulfur carrier)-H + biotin + 2 5'-deoxyadenosine + 2 L-methionine + 2 oxidized [2Fe-2S]-[ferredoxin]. Its pathway is cofactor biosynthesis; biotin biosynthesis; biotin from 7,8-diaminononanoate: step 2/2. Functionally, catalyzes the conversion of dethiobiotin (DTB) to biotin by the insertion of a sulfur atom into dethiobiotin via a radical-based mechanism. The polypeptide is Biotin synthase (Francisella philomiragia subsp. philomiragia (strain ATCC 25017 / CCUG 19701 / FSC 153 / O#319-036)).